The sequence spans 255 residues: MLMVISPAKSLDFTAPQTVLPLTTPELKAQIAELSKVTRKLTAADLKRLMHISDALATLNRERFQAFDPEVEEGLQAVIAFNGDVYAGLNARELDRPALEWAQDHLRILSGLYGVLRPFDALQPYRLEMGTRLKTKKGANLYDFWGETISRTLNQAAEGHADPTLVNLASQEYFGAVDAKALKLPVVTCHFKEEKGGELRVLGFFAKKARGRMARYIIDNRIDQAEALKGFDLDGYRFQPGLSTSADWVFARPQP.

This sequence belongs to the UPF0246 family.

This Caulobacter vibrioides (strain ATCC 19089 / CIP 103742 / CB 15) (Caulobacter crescentus) protein is UPF0246 protein CC_3385.